The following is a 62-amino-acid chain: U-stichotoxin-Hau1a (62 aa).

The first 21 residues, 1–21 (MKPAIFLMLFVAMFLISEGEG), serve as a signal peptide directing secretion. The propeptide occupies 22-31 (FKPKDAPQER). Pro-36 carries the post-translational modification Hydroxyproline. 2 disulfides stabilise this stretch: Cys-41-Cys-53 and Cys-44-Cys-59.

This sequence belongs to the Hau1a/HC18/HC19 family.

The protein localises to the secreted. It localises to the nematocyst. In terms of biological role, toxin that is lethal to crab. Does not produce the typical symptoms associated with sodium channel toxins in crabs, suggesting that it likely does not act on sodium channels. The protein is U-stichotoxin-Hau1a of Heteractis aurora (Banded sea anemone).